The following is an 818-amino-acid chain: Sorting nexin-29 (818 aa).

The RUN domain occupies 36–180; sequence SDSDSRVTCL…ILFAINIDNK (145 aa). The interval 267–299 is disordered; that stretch reads VSFDDDEEEQGTGDTLKKMPGTAESSEENSDRS. Phosphoserine is present on residues serine 268, serine 291, serine 292, serine 330, serine 344, serine 447, and serine 452. 2 disordered regions span residues 343 to 375 and 441 to 462; these read KSIDDDVDENEEDAYRSPLGRGHTGHAESPDRT and RYREASSPGQGSPLSSLLPSAS. The segment covering 445–462 has biased composition (low complexity); the sequence is ASSPGQGSPLSSLLPSAS. A coiled-coil region spans residues 467–547; sequence MTVHELRQAI…VLKVQLKKYV (81 aa). At serine 642 the chain carries Phosphoserine. Threonine 644 is subject to Phosphothreonine. Serine 645 and serine 649 each carry phosphoserine. The PX domain maps to 659 to 782; the sequence is ALINVWIPSV…PFFVDITPPG (124 aa). Residues 781 to 818 form a disordered region; that stretch reads PGEPLNKSSRPKAVSRFPKLSRGHPREVRNVEPQSGDL.

This sequence belongs to the sorting nexin family.

In Mus musculus (Mouse), this protein is Sorting nexin-29 (Snx29).